Consider the following 387-residue polypeptide: GTPase Obg (387 aa).

An Obg domain is found at 1-159; sequence MKFVDEAVIR…RSLRLELMLL (159 aa). The OBG-type G domain maps to 160–333; the sequence is ADVGLLGMPN…LALKLMDFID (174 aa). GTP is bound by residues 166–173, 191–195, 213–216, 283–286, and 314–316; these read GMPNAGKS, FTTLV, DIPG, NKTD, and SAY. Mg(2+) is bound by residues S173 and T193.

It belongs to the TRAFAC class OBG-HflX-like GTPase superfamily. OBG GTPase family. As to quaternary structure, monomer. Mg(2+) is required as a cofactor.

The protein localises to the cytoplasm. An essential GTPase which binds GTP, GDP and possibly (p)ppGpp with moderate affinity, with high nucleotide exchange rates and a fairly low GTP hydrolysis rate. Plays a role in control of the cell cycle, stress response, ribosome biogenesis and in those bacteria that undergo differentiation, in morphogenesis control. The chain is GTPase Obg from Shewanella loihica (strain ATCC BAA-1088 / PV-4).